The chain runs to 546 residues: Mitochondrial distribution and morphology protein 34 (546 aa).

The region spanning 1–195 (MAFNFNWSPL…LPAIIHRLSL (195 aa)) is the SMP-LTD domain. Disordered regions lie at residues 208–230 (EVKA…QDPV), 299–319 (SHGG…SHVA), 344–382 (TMGA…CTDS), 395–416 (SSSA…SPDA), and 517–546 (RRIQ…AYGQ). Residues 349 to 362 (RHPRTRPSRKHKRR) show a composition bias toward basic residues. Residues 363–374 (VVDLRKPQKLDD) show a composition bias toward basic and acidic residues.

The protein belongs to the MDM34 family. In terms of assembly, component of the ER-mitochondria encounter structure (ERMES) or MDM complex, composed of MMM1, MDM10, MDM12 and MDM34.

Its subcellular location is the mitochondrion outer membrane. Component of the ERMES/MDM complex, which serves as a molecular tether to connect the endoplasmic reticulum (ER) and mitochondria. Components of this complex are involved in the control of mitochondrial shape and protein biogenesis, and function in nonvesicular lipid trafficking between the ER and mitochondria. MDM34 is required for the interaction of the ER-resident membrane protein MMM1 and the outer mitochondrial membrane-resident beta-barrel protein MDM10. In Arthroderma otae (strain ATCC MYA-4605 / CBS 113480) (Microsporum canis), this protein is Mitochondrial distribution and morphology protein 34.